Here is a 464-residue protein sequence, read N- to C-terminus: Ubiquinone biosynthesis monooxygenase COQ6, mitochondrial (464 aa).

Residues 1 to 24 (MRCLGGSSLSRLLRMLSQSQGRAL) constitute a mitochondrion transit peptide.

Belongs to the UbiH/COQ6 family. As to quaternary structure, component of a multi-subunit COQ enzyme complex, composed of at least coq3, coq4, coq5, coq6, coq7 and coq9. Interacts with coq8b and coq7. Requires FAD as cofactor.

The protein resides in the mitochondrion inner membrane. The protein localises to the golgi apparatus. Its subcellular location is the cell projection. The enzyme catalyses a 4-hydroxy-3-(all-trans-polyprenyl)benzoate + 2 reduced [2Fe-2S]-[ferredoxin] + O2 + 2 H(+) = a 3,4-dihydroxy-5-(all-trans-polyprenyl)benzoate + 2 oxidized [2Fe-2S]-[ferredoxin] + H2O. It carries out the reaction a 2-methoxy-6-(all-trans-polyprenyl)phenol + 2 reduced [2Fe-2S]-[ferredoxin] + O2 + 2 H(+) = a 2-methoxy-6-(all-trans-polyprenyl)benzene-1,4-diol + 2 oxidized [2Fe-2S]-[ferredoxin] + H2O. It functions in the pathway cofactor biosynthesis; ubiquinone biosynthesis. FAD-dependent monooxygenase required for two non-consecutive steps during ubiquinone biosynthesis. Required for the C5-ring hydroxylation during ubiquinone biosynthesis by catalyzing the hydroxylation of 4-hydroxy-3-(all-trans-polyprenyl)benzoic acid to 3,4-dihydroxy-5-(all-trans-polyprenyl)benzoic acid. Also acts downstream of coq4, for the C1-hydroxylation during ubiquinone biosynthesis by catalyzing the hydroxylation of 2-methoxy-6-(all-trans-polyprenyl)phenol to 2-methoxy-6-(all-trans-polyprenyl)benzene-1,4-diol. The electrons required for the hydroxylation reaction are funneled indirectly to coq6 from NADPH via a ferredoxin/ferredoxin reductase system. This is Ubiquinone biosynthesis monooxygenase COQ6, mitochondrial from Xenopus tropicalis (Western clawed frog).